The sequence spans 119 residues: Methylglyoxal synthase (119 aa).

In terms of domain architecture, MGS-like spans M1–F119. Substrate contacts are provided by residues H8, K12, T34–T37, and S54–G55. D60 functions as the Proton donor/acceptor in the catalytic mechanism. Residue H87 participates in substrate binding.

The protein belongs to the methylglyoxal synthase family.

The catalysed reaction is dihydroxyacetone phosphate = methylglyoxal + phosphate. Functionally, catalyzes the formation of methylglyoxal from dihydroxyacetone phosphate. This chain is Methylglyoxal synthase, found in Clostridium botulinum (strain Eklund 17B / Type B).